We begin with the raw amino-acid sequence, 109 residues long: Putative membrane protein insertion efficiency factor (109 aa).

Belongs to the UPF0161 family.

It is found in the cell inner membrane. In terms of biological role, could be involved in insertion of integral membrane proteins into the membrane. In Rhodopseudomonas palustris (strain BisA53), this protein is Putative membrane protein insertion efficiency factor.